We begin with the raw amino-acid sequence, 520 residues long: GMP synthase [glutamine-hydrolyzing] (520 aa).

The region spanning Lys13–Asp205 is the Glutamine amidotransferase type-1 domain. Residue Cys90 is the Nucleophile of the active site. Residues His179 and Glu181 contribute to the active site. The GMPS ATP-PPase domain maps to Trp206–Arg395. Ser233 to Ser239 contacts ATP.

Homodimer.

It carries out the reaction XMP + L-glutamine + ATP + H2O = GMP + L-glutamate + AMP + diphosphate + 2 H(+). Its pathway is purine metabolism; GMP biosynthesis; GMP from XMP (L-Gln route): step 1/1. In terms of biological role, catalyzes the synthesis of GMP from XMP. The sequence is that of GMP synthase [glutamine-hydrolyzing] from Streptococcus pneumoniae serotype 2 (strain D39 / NCTC 7466).